Here is an 843-residue protein sequence, read N- to C-terminus: Translation initiation factor IF-2 (843 aa).

The segment at Gln-94–Pro-259 is disordered. The span at Ser-96–Arg-135 shows a compositional bias: basic and acidic residues. Over residues Asn-136 to Ala-177 the composition is skewed to low complexity. Composition is skewed to basic and acidic residues over residues Asp-178–Pro-219 and Thr-227–Arg-236. Residues Arg-237–Ala-250 are compositionally biased toward basic residues. In terms of domain architecture, tr-type G spans Ser-343–Lys-512. The G1 stretch occupies residues Gly-352–Thr-359. GTP is bound at residue Gly-352–Thr-359. The G2 stretch occupies residues Gly-377–His-381. The tract at residues Asp-398–Gly-401 is G3. Residues Asp-398–His-402 and Asn-452–Asp-455 contribute to the GTP site. The tract at residues Asn-452–Asp-455 is G4. The G5 stretch occupies residues Ser-488–Lys-490.

This sequence belongs to the TRAFAC class translation factor GTPase superfamily. Classic translation factor GTPase family. IF-2 subfamily.

Its subcellular location is the cytoplasm. Its function is as follows. One of the essential components for the initiation of protein synthesis. Protects formylmethionyl-tRNA from spontaneous hydrolysis and promotes its binding to the 30S ribosomal subunits. Also involved in the hydrolysis of GTP during the formation of the 70S ribosomal complex. In Pseudomonas savastanoi pv. phaseolicola (strain 1448A / Race 6) (Pseudomonas syringae pv. phaseolicola (strain 1448A / Race 6)), this protein is Translation initiation factor IF-2.